Consider the following 1287-residue polypeptide: Rho GTPase-activating protein 33 (1287 aa).

Positions 1–40 are disordered; that stretch reads MVARSTDSLDGPGEGSVQPLPTAGGPSVKGKPGKRLSAPR. Ser8 is subject to Phosphoserine. The PX; atypical domain occupies 59–168; the sequence is FGHIQLLLSP…CGPVLTWMEL (110 aa). The 63-residue stretch at 186-248 folds into the SH3 domain; sequence PAVAAAHVIK…PSECVELFTE (63 aa). The 196-residue stretch at 315 to 510 folds into the Rho-GAP domain; that stretch reads CDLGEHLSNS…FLLTHVDVLF (196 aa). 6 disordered regions span residues 551 to 792, 813 to 832, 859 to 1030, 1056 to 1075, 1090 to 1134, and 1146 to 1287; these read RTQG…SPAA, AGGAPASATPTPALSPGRSL, KLRG…VPTP, GPPSFQPSSPAPVWRSSLGP, GASE…SPDF, and PPDH…RSYC. A compositionally biased stretch (low complexity) spans 558–571; the sequence is TPTEPTTPKAPASP. Position 570 is a phosphoserine (Ser570). Over residues 572-584 the composition is skewed to basic and acidic residues; that stretch reads AERRKGERGEKQR. Over residues 622–645 the composition is skewed to polar residues; that stretch reads SGSRPDTVTLRSAKSEESLSSQAS. The residue at position 636 (Ser636) is a Phosphoserine. A compositionally biased stretch (low complexity) spans 672–709; that stretch reads AGSCESLSSSSSSESSSSESSSSSSESSAAGLGALSGS. Phosphoserine is present on Ser727. A compositionally biased stretch (pro residues) spans 752–766; that stretch reads PGDPAPPASPAPPAP. Low complexity-rich tracts occupy residues 813 to 829 and 896 to 919; these read AGGAPASATPTPALSPG and PARLMALALAERAQQVAEQQSQQE. 2 stretches are compositionally biased toward polar residues: residues 972–981 and 1019–1028; these read RQQSDGSLLR and SPCSVPSQVP. Tyr1169 carries the post-translational modification Phosphotyrosine. The span at 1175 to 1189 shows a compositional bias: low complexity; it reads GPRGPSPASSSSSSP. Arg1244 bears the Omega-N-methylarginine mark. Residues 1274–1287 are compositionally biased toward polar residues; sequence SWSLHSEGQTRSYC.

This sequence belongs to the PX domain-containing GAP family. Specifically interacts with CDC42 and RHOQ/TC10 through its Rho-GAP domain. Interacts with NEK6.

In terms of biological role, may be involved in several stages of intracellular trafficking. Could play an important role in the regulation of glucose transport by insulin. May act as a downstream effector of RHOQ/TC10 in the regulation of insulin-stimulated glucose transport. In Homo sapiens (Human), this protein is Rho GTPase-activating protein 33 (ARHGAP33).